Consider the following 156-residue polypeptide: MPRKGPVPRREILPDPVYNSRLAARFINRLMYDGKKGVAEKLFYKSLETLGEKTGEEPLKAFERAVESVKPHLEVKARRVGGATYQVPMDVRPDRQVSLAIRWLINYARSRGEKGMSAKLSAELIDAFNSRGGAVKKKEDTHRMAEANKAFAHYRW.

The protein belongs to the universal ribosomal protein uS7 family. As to quaternary structure, part of the 30S ribosomal subunit. Contacts proteins S9 and S11.

Functionally, one of the primary rRNA binding proteins, it binds directly to 16S rRNA where it nucleates assembly of the head domain of the 30S subunit. Is located at the subunit interface close to the decoding center, probably blocks exit of the E-site tRNA. This chain is Small ribosomal subunit protein uS7, found in Nitratidesulfovibrio vulgaris (strain DSM 19637 / Miyazaki F) (Desulfovibrio vulgaris).